Reading from the N-terminus, the 1319-residue chain is ERAD-associated E3 ubiquitin-protein ligase DOA10 (1319 aa).

Residue M1 is modified to N-acetylmethionine. At 1–131 the chain is on the cytoplasmic side; it reads MDVDSDVNVS…LTFFEKARLA (131 aa). The segment at 31–100 adopts an RING-CH-type zinc-finger fold; it reads DDAPSGATCR…DICHYPIQFK (70 aa). Positions 39, 42, 56, 58, 66, 69, 90, and 93 each coordinate Zn(2+). The chain crosses the membrane as a helical span at residues 132–152; it reads LTIGLAAVLYIIGVPLVWNMF. Topologically, residues 153-203 are lumenal; it reads GKLYTMMLDGSSPYPGDFLKSLIYGYDQSATPELTTRAIFYQLLQNHSFTS. Residues 204 to 224 traverse the membrane as a helical segment; that stretch reads LQFIMIVILHIALYFQYDMIV. The Cytoplasmic segment spans residues 225-468; sequence REDVFSKMVF…GPLVINLKLK (244 aa). Over residues 291–306 the composition is skewed to low complexity; sequence ADNNNNVINPRNDNVP. 2 disordered regions span residues 291–315 and 329–381; these read ADNN…DHRN and EATE…EADY. Residues 469 to 489 form a helical membrane-spanning segment; sequence LLNVIAYFIIAVVFTAIYLAI. Residues 490 to 491 are Lumenal-facing; sequence SY. Residues 492 to 512 form a helical membrane-spanning segment; that stretch reads LFPTFIGFGLLKIYFGIFKVI. The Cytoplasmic portion of the chain corresponds to 513–626; it reads LRGLCHLYYL…LFALKCTFKV (114 aa). Residues 627–647 traverse the membrane as a helical segment; sequence FTLFFIELAGFPILAGVMLDF. Over 648-660 the chain is Lumenal; the sequence is SLFCPILASNSRM. A helical membrane pass occupies residues 661 to 681; the sequence is LWVPSICAIWPPFSLFVYWTI. The Cytoplasmic segment spans residues 682–739; that stretch reads GTLYMYWFAKYIGMIRKNIIRPGVLFFIRSPEDPNIKILHDSLIHPMSIQLSRLCLSM. Residues 740–760 form a helical membrane-spanning segment; sequence FIYAIFIVLGFGFHTRIFFPF. The Lumenal segment spans residues 761–777; that stretch reads MLKSNLLSVPEAYKPTS. Residues 778 to 797 traverse the membrane as a helical segment; the sequence is IISWKFNTILLTLYFTKRIL. At 798-965 the chain is on the cytoplasmic side; that stretch reads ESSSYVKPLL…YVPPDFRLRY (168 aa). A helical membrane pass occupies residues 966–986; it reads MTLLGLVWLFASILMLGVTFI. At 987–1019 the chain is on the lumenal side; that stretch reads SQALINFVCSFGFLPVVKLLLGERNKVYVAWKE. A helical membrane pass occupies residues 1020 to 1040; sequence LSDISYSYLNIYYVCVGSVCL. At 1041–1113 the chain is on the cytoplasmic side; sequence SKIAKDILHF…IFDSMLVKYN (73 aa). A helical transmembrane segment spans residues 1114-1134; it reads LMVFIAIMIAVIRTMVSWVVL. The Lumenal segment spans residues 1135–1168; the sequence is TDGILACYNYLTIRVFGNSSYTIGNSKWFKYDES. The chain crosses the membrane as a helical span at residues 1169 to 1189; it reads LLFVVWIISSMVNFGTGYKSL. Residues 1190 to 1213 are Cytoplasmic-facing; sequence KLFFRNRNTSKLNFLKTMALELFK. A helical transmembrane segment spans residues 1214–1234; the sequence is QGFLHMVIYVLPIIILSLVFL. Residues 1235–1270 are Lumenal-facing; that stretch reads RDVSTKQIIDISHGSRSFTLSLNESFPTWTRMQDIY. The chain crosses the membrane as a helical span at residues 1271-1291; it reads FGLLIALESFTFFFQATVLFI. Over 1292 to 1319 the chain is Cytoplasmic; that stretch reads QWFKSTVQNVKDEVYTKGRALENLPDES.

It belongs to the DOA10/MARCH6 family. As to quaternary structure, component of the DOA10 ubiquitin ligase complex which contains E3 ligase SSM4/DOA10 and CDC48-binding protein UBX2/SEL1. The DOA10 complex interacts with the heterotrimeric CDC48-NPL4-UFD1 ATPase complex which is recruited by UBX2/SEL1 via its interaction with CDC48. Interacts with its associated ubiquitin conjugating enzymes UBC6 and UBC7 with its membrane anchor CUE1. Interacts with PEX29.

The protein resides in the endoplasmic reticulum membrane. It is found in the nucleus inner membrane. It catalyses the reaction S-ubiquitinyl-[E2 ubiquitin-conjugating enzyme]-L-cysteine + [acceptor protein]-L-lysine = [E2 ubiquitin-conjugating enzyme]-L-cysteine + N(6)-ubiquitinyl-[acceptor protein]-L-lysine.. The protein operates within protein modification; protein ubiquitination. In terms of biological role, E3 ubiquitin-protein ligase which accepts ubiquitin specifically from endoplasmic reticulum-associated UBC6 and UBC7 E2 ligases, and transfers it to substrates promoting their degradation. Mediates the degradation of a broad range of substrates, including endoplasmic reticulum membrane proteins (ERQC), soluble nuclear proteins and soluble cytoplasmic proteins (CytoQC). Component of the DOA10 ubiquitin ligase complex, which is part of the ERAD-C pathway responsible for the rapid degradation of membrane proteins with misfolded cytoplasmic domains. ERAD-C substrates are ubiquitinated through DOA10 in conjunction with the E2 ubiquitin-conjugating enzymes UBC6 and UBC7-CUE1. Ubiquitinated substrates are then removed to the cytosol via the action of the UFD1-NPL4-CDC48/p97 (UNC) AAA ATPase complex and targeted to the proteasome. Also recognizes the N-terminally acetylated residue of proteins as degradation signal (degron). N-terminally acetylated target proteins include MATALPHA2, TBF1, SLK19, YMR090W, HIS3, HSP104, UBP6 and ARO8. Catalyzes ubiquitination of mislocalized tail-anchored proteins that are extracted from the mitochondrion membrane by MSP1: following extraction, mistargeted proteins are transferred to the endoplasmic reticulum, where they are ubiquitinated by DOA10 and degraded by the proteasome. This is ERAD-associated E3 ubiquitin-protein ligase DOA10 (SSM4) from Saccharomyces cerevisiae (strain ATCC 204508 / S288c) (Baker's yeast).